The sequence spans 498 residues: Glycerol kinase (498 aa).

Threonine 12 contacts ADP. ATP contacts are provided by threonine 12, threonine 13, and serine 14. Threonine 12 provides a ligand contact to sn-glycerol 3-phosphate. Arginine 16 is an ADP binding site. The sn-glycerol 3-phosphate site is built by arginine 82, glutamate 83, tyrosine 134, and aspartate 244. 5 residues coordinate glycerol: arginine 82, glutamate 83, tyrosine 134, aspartate 244, and glutamine 245. Residues threonine 266 and glycine 310 each contribute to the ADP site. 4 residues coordinate ATP: threonine 266, glycine 310, glutamine 314, and glycine 411. Residues glycine 411 and asparagine 415 each contribute to the ADP site.

The protein belongs to the FGGY kinase family.

The catalysed reaction is glycerol + ATP = sn-glycerol 3-phosphate + ADP + H(+). It participates in polyol metabolism; glycerol degradation via glycerol kinase pathway; sn-glycerol 3-phosphate from glycerol: step 1/1. Inhibited by fructose 1,6-bisphosphate (FBP). Its function is as follows. Key enzyme in the regulation of glycerol uptake and metabolism. Catalyzes the phosphorylation of glycerol to yield sn-glycerol 3-phosphate. The polypeptide is Glycerol kinase (Chloroflexus aggregans (strain MD-66 / DSM 9485)).